We begin with the raw amino-acid sequence, 65 residues long: MQASGLILVALFSAVVSYLALLHLSSSSSSCVVVVTGESFRISGCDFTEEFIGFAKTLRVANSQP.

Over 1-3 (MQA) the chain is Lumenal. A helical transmembrane segment spans residues 4 to 24 (SGLILVALFSAVVSYLALLHL). Over 25 to 65 (SSSSSSCVVVVTGESFRISGCDFTEEFIGFAKTLRVANSQP) the chain is Cytoplasmic.

The protein belongs to the Tymovirales TGBp3 protein family.

The protein localises to the host endoplasmic reticulum membrane. In terms of biological role, plays a role in viral cell-to-cell propagation, by facilitating genome transport to neighboring plant cells through plasmosdesmata. May induce the formation of granular vesicles derived from the Endoplasmic reticulum, which align on actin filaments. The polypeptide is Movement protein TGBp3 (Carnation latent virus (CLV)).